The chain runs to 175 residues: Shikimate kinase (175 aa).

ATP is bound at residue 14 to 19 (GAGKST). Residue Ser18 coordinates Mg(2+). 3 residues coordinate substrate: Asp36, Arg60, and Gly82. Arg120 serves as a coordination point for ATP. Arg140 contacts substrate. Residue Gln157 participates in ATP binding.

This sequence belongs to the shikimate kinase family. In terms of assembly, monomer. Mg(2+) is required as a cofactor.

It is found in the cytoplasm. It catalyses the reaction shikimate + ATP = 3-phosphoshikimate + ADP + H(+). It functions in the pathway metabolic intermediate biosynthesis; chorismate biosynthesis; chorismate from D-erythrose 4-phosphate and phosphoenolpyruvate: step 5/7. In terms of biological role, catalyzes the specific phosphorylation of the 3-hydroxyl group of shikimic acid using ATP as a cosubstrate. The polypeptide is Shikimate kinase (Pasteurella multocida (strain Pm70)).